The chain runs to 564 residues: Chaperonin GroEL 2 (564 aa).

ATP contacts are provided by residues 29–32, 86–90, glycine 413, and aspartate 493; these read TIGP and DGTTT. The tract at residues 521–541 is disordered; sequence DKPEPPAPAGDGGGDPMGGMG. Over residues 530 to 541 the composition is skewed to gly residues; that stretch reads GDGGGDPMGGMG.

Belongs to the chaperonin (HSP60) family. Forms a cylinder of 14 subunits composed of two heptameric rings stacked back-to-back. Interacts with the co-chaperonin GroES.

The protein resides in the cytoplasm. The catalysed reaction is ATP + H2O + a folded polypeptide = ADP + phosphate + an unfolded polypeptide.. Its function is as follows. Together with its co-chaperonin GroES, plays an essential role in assisting protein folding. The GroEL-GroES system forms a nano-cage that allows encapsulation of the non-native substrate proteins and provides a physical environment optimized to promote and accelerate protein folding. This Prochlorococcus marinus (strain MIT 9303) protein is Chaperonin GroEL 2.